The chain runs to 229 residues: Potassium/proton antiporter CemA (229 aa).

Helical transmembrane passes span 7 to 27, 114 to 134, 154 to 174, and 189 to 209; these read FTPLLYLASIVFLPWWISLSL, IICFVILSGYSILGNEELLIL, ILLLTDLCIGFHSPHGWELMI, and IISGLVSTFPVILDTILKYWI.

This sequence belongs to the CemA family.

It is found in the plastid. It localises to the chloroplast inner membrane. The catalysed reaction is K(+)(in) + H(+)(out) = K(+)(out) + H(+)(in). In terms of biological role, contributes to K(+)/H(+) antiport activity by supporting proton efflux to control proton extrusion and homeostasis in chloroplasts in a light-dependent manner to modulate photosynthesis. Prevents excessive induction of non-photochemical quenching (NPQ) under continuous-light conditions. Indirectly promotes efficient inorganic carbon uptake into chloroplasts. This chain is Potassium/proton antiporter CemA, found in Vitis vinifera (Grape).